The sequence spans 116 residues: Immunoglobulin heavy variable 3-13 (116 aa).

Positions 1 to 19 are cleaved as a signal peptide; that stretch reads MELGLSWVFLVAILEGVQC. The framework-1 stretch occupies residues 20–44; that stretch reads EVQLVESGGGLVQPGGSLRLSCAAS. The Ig-like domain maps to 20-116; the sequence is EVQLVESGGG…GDTAVYYCAR (97 aa). C41 and C114 are oxidised to a cystine. A complementarity-determining-1 region spans residues 45–52; the sequence is GFTFSSYD. The segment at 53–69 is framework-2; that stretch reads MHWVRQATGKGLEWVSA. The complementarity-determining-2 stretch occupies residues 70-76; sequence IGTAGDP. Residues 77 to 114 form a framework-3 region; sequence YYPGSVKGRFTISRENAKNSLYLQMNSLRAGDTAVYYC. Positions 115 to 116 are complementarity-determining-3; it reads AR.

In terms of assembly, immunoglobulins are composed of two identical heavy chains and two identical light chains; disulfide-linked.

The protein resides in the secreted. It is found in the cell membrane. V region of the variable domain of immunoglobulin heavy chains that participates in the antigen recognition. Immunoglobulins, also known as antibodies, are membrane-bound or secreted glycoproteins produced by B lymphocytes. In the recognition phase of humoral immunity, the membrane-bound immunoglobulins serve as receptors which, upon binding of a specific antigen, trigger the clonal expansion and differentiation of B lymphocytes into immunoglobulins-secreting plasma cells. Secreted immunoglobulins mediate the effector phase of humoral immunity, which results in the elimination of bound antigens. The antigen binding site is formed by the variable domain of one heavy chain, together with that of its associated light chain. Thus, each immunoglobulin has two antigen binding sites with remarkable affinity for a particular antigen. The variable domains are assembled by a process called V-(D)-J rearrangement and can then be subjected to somatic hypermutations which, after exposure to antigen and selection, allow affinity maturation for a particular antigen. The protein is Immunoglobulin heavy variable 3-13 of Homo sapiens (Human).